The chain runs to 195 residues: Large ribosomal subunit protein bL25 (195 aa).

Belongs to the bacterial ribosomal protein bL25 family. CTC subfamily. In terms of assembly, part of the 50S ribosomal subunit; part of the 5S rRNA/L5/L18/L25 subcomplex. Contacts the 5S rRNA. Binds to the 5S rRNA independently of L5 and L18.

In terms of biological role, this is one of the proteins that binds to the 5S RNA in the ribosome where it forms part of the central protuberance. This Chlorobium chlorochromatii (strain CaD3) protein is Large ribosomal subunit protein bL25.